The following is a 799-amino-acid chain: Zinc finger protein 227 (799 aa).

Residues 23–94 (VTFKDVAVVF…ETETQRSSKH (72 aa)) enclose the KRAB domain. 19 consecutive C2H2-type zinc fingers follow at residues 250-272 (HPCG…PNVH), 269-291 (PNVH…QRIH), 324-346 (YRCD…YRTH), 352-374 (YKCE…QRVH), 380-402 (YKCE…QRVH), 408-430 (YKCE…QRVH), 436-458 (YKCD…RRVH), 464-486 (YKCE…FRVH), 492-514 (YKCK…QNVH), 520-542 (FKCE…QRVH), 548-570 (YRCD…QVIH), 576-598 (YKCE…QRVH), 604-626 (YKCE…QRVH), 632-654 (YKCG…QRVH), 660-682 (YKCD…QRGH), 688-710 (YKCE…QRVH), 716-738 (HICE…LGVH), 744-766 (FKCE…QRVH), and 772-794 (YKCD…QKVH).

This sequence belongs to the krueppel C2H2-type zinc-finger protein family.

The protein localises to the nucleus. Its function is as follows. May be involved in transcriptional regulation. The protein is Zinc finger protein 227 (ZNF227) of Homo sapiens (Human).